The primary structure comprises 558 residues: SPATS2-like protein (558 aa).

At alanine 2 the chain carries N-acetylalanine. The span at 63 to 79 (GKKKNNKRKRSKSKQHQ) shows a compositional bias: basic residues. 2 disordered regions span residues 63 to 148 (GKKK…RGIT) and 161 to 202 (DGNP…SNAP). 2 stretches are compositionally biased toward basic and acidic residues: residues 80–92 (GNKDAKDKGERPE) and 110–142 (GCEKDSSSPDSAREKLALTPREKKISILEEPPR). Residue serine 120 is modified to Phosphoserine. Residues 279–344 (KEEAMDILTA…ARFSCDIEQL (66 aa)) are a coiled coil. The interval 383–514 (KQGNFSRKSS…SEKARRRQHA (132 aa)) is disordered. The span at 416-433 (DACQQTMPTNKQQNGPSN) shows a compositional bias: polar residues. Phosphoserine is present on serine 455. Over residues 469-485 (HEHRRQPHNGFRPKNKG) the composition is skewed to basic residues.

It belongs to the SPATS2 family.

Its subcellular location is the cytoplasm. It localises to the nucleus. The protein resides in the nucleolus. This chain is SPATS2-like protein (Spats2l), found in Rattus norvegicus (Rat).